A 176-amino-acid chain; its full sequence is Photosystem I assembly protein Ycf4 (176 aa).

A run of 2 helical transmembrane segments spans residues 22–42 (FLWAFILFFGSLEFILVGTAS) and 57–77 (VMTFYGISGLFISLYLLSMLF).

Belongs to the Ycf4 family.

It is found in the plastid thylakoid membrane. In terms of biological role, seems to be required for the assembly of the photosystem I complex. The protein is Photosystem I assembly protein Ycf4 of Cuscuta obtusiflora (Peruvian dodder).